Consider the following 212-residue polypeptide: High frequency lysogenization protein HflD homolog (212 aa).

Residues 92 to 128 are a coiled coil; it reads LIALERKLNAKSAALDELGKRIGQLERQLEHFELLSE.

It belongs to the HflD family.

The protein localises to the cytoplasm. The protein resides in the cell inner membrane. The chain is High frequency lysogenization protein HflD homolog from Pectobacterium atrosepticum (strain SCRI 1043 / ATCC BAA-672) (Erwinia carotovora subsp. atroseptica).